The sequence spans 296 residues: Fructose-bisphosphate aldolase class 1 (296 aa).

Glu-175 functions as the Proton acceptor in the catalytic mechanism. Residue Lys-212 is the Schiff-base intermediate with dihydroxyacetone-P of the active site.

Belongs to the class I fructose-bisphosphate aldolase family.

The catalysed reaction is beta-D-fructose 1,6-bisphosphate = D-glyceraldehyde 3-phosphate + dihydroxyacetone phosphate. The protein operates within carbohydrate degradation; glycolysis; D-glyceraldehyde 3-phosphate and glycerone phosphate from D-glucose: step 4/4. This is Fructose-bisphosphate aldolase class 1 from Staphylococcus aureus (strain bovine RF122 / ET3-1).